A 27-amino-acid chain; its full sequence is Trypsin inhibitor 5 (27 aa).

3 cysteine pairs are disulfide-bonded: C1-C18, C8-C20, and C14-C26.

The protein resides in the secreted. In terms of biological role, inhibits trypsin. This is Trypsin inhibitor 5 from Sechium edule (Chayote).